Reading from the N-terminus, the 425-residue chain is 3-phosphoshikimate 1-carboxyvinyltransferase (425 aa).

Residues Lys-20, Ser-21, and Arg-25 each contribute to the 3-phosphoshikimate site. Lys-20 contacts phosphoenolpyruvate. Phosphoenolpyruvate is bound by residues Gly-92 and Arg-120. 3-phosphoshikimate contacts are provided by Ser-165, Gln-167, Asp-312, and Lys-339. Gln-167 serves as a coordination point for phosphoenolpyruvate. Catalysis depends on Asp-312, which acts as the Proton acceptor. The phosphoenolpyruvate site is built by Arg-343 and Arg-385.

The protein belongs to the EPSP synthase family. In terms of assembly, monomer.

It localises to the cytoplasm. The enzyme catalyses 3-phosphoshikimate + phosphoenolpyruvate = 5-O-(1-carboxyvinyl)-3-phosphoshikimate + phosphate. The protein operates within metabolic intermediate biosynthesis; chorismate biosynthesis; chorismate from D-erythrose 4-phosphate and phosphoenolpyruvate: step 6/7. In terms of biological role, catalyzes the transfer of the enolpyruvyl moiety of phosphoenolpyruvate (PEP) to the 5-hydroxyl of shikimate-3-phosphate (S3P) to produce enolpyruvyl shikimate-3-phosphate and inorganic phosphate. The sequence is that of 3-phosphoshikimate 1-carboxyvinyltransferase from Alkaliphilus metalliredigens (strain QYMF).